A 43-amino-acid polypeptide reads, in one-letter code: Protein PsbN (43 aa).

The chain crosses the membrane as a helical span at residues 7–27 (IAIFISCLIVSFTGYALYTAF).

It belongs to the PsbN family.

The protein localises to the plastid. It is found in the chloroplast thylakoid membrane. Its function is as follows. May play a role in photosystem I and II biogenesis. The sequence is that of Protein PsbN from Psilotum nudum (Whisk fern).